A 677-amino-acid polypeptide reads, in one-letter code: Platelet glycoprotein Ib alpha chain (677 aa).

The signal sequence occupies residues 1–16 (MHLLLWLLLLARLCRP). The LRRNT domain maps to 17-47 (EFICEVSKVTSQVEVNCDNKGLKALPPGLPG). Residues 17–564 (EFICEVSKVT…NPDLCCLLPL (548 aa)) lie on the Extracellular side of the membrane. An intrachain disulfide couples Cys20 to Cys33. LRR repeat units lie at residues 72–93 (RLAQ…GMLP), 94–115 (RLET…GRAL), 117–138 (ALTT…TLDG), 141–162 (HLHE…LLAP), 165–186 (QLRK…FLEG), and 189–210 (ELDT…FFGD). In terms of domain architecture, LRRCT spans 221 to 282 (NPWSCDCEIL…HTYQGKDCPS (62 aa)). Disulfide bonds link Cys225/Cys264 and Cys227/Cys280. Sulfotyrosine occurs at positions 291 and 294. 11 O-linked (GalNAc...) threonine glycosylation sites follow: Thr309, Thr319, Thr323, Thr324, Thr346, Thr354, Thr368, Thr372, Thr376, Thr377, and Thr399. Residues 359–499 (TLGPIMPTTT…EPTTTPTSPT (141 aa)) are disordered. 4 stretches are compositionally biased toward low complexity: residues 362 to 385 (PIMP…TTPT), 393 to 403 (PTTLEPTTTPI), 411 to 421 (PTTLEPTTTPI), and 427 to 470 (TPST…TPTI). The segment covering 471–485 (PELPTPPTTPEPTMP) has biased composition (pro residues). Residues 486-499 (PTTLEPTTTPTSPT) show a composition bias toward low complexity. The O-linked (GalNAc...) threonine glycan is linked to Thr487. Ser497 carries an O-linked (GalNAc...) serine glycan. The O-linked (GalNAc...) threonine glycan is linked to Thr500. O-linked (GalNAc...) serine glycosylation is present at Ser523. The helical transmembrane segment at 565 to 585 (GFYILGLLWLLFASVVLILLL) threads the bilayer. Residues 586–677 (TWAQHVKPQA…VGVRYSSHSL (92 aa)) lie on the Cytoplasmic side of the membrane. Phosphoserine is present on residues Ser654 and Ser657.

As to quaternary structure, two GP-Ib beta are disulfide-linked to one GP-Ib alpha. GP-IX is complexed with the GP-Ib heterodimer via a non covalent linkage. Interacts with FLNB. Interacts with FLNA (via filamin repeats 4, 9, 12, 17, 19, 21, and 23). In terms of processing, O-glycosylated. Glycocalicin is the product of a proteolytic cleavage/shedding, catalyzed by ADAM17, which releases most of the extracellular domain. Binding sites for vWF and thrombin are in this part of the protein.

It localises to the membrane. Its function is as follows. GP-Ib, a surface membrane protein of platelets, participates in the formation of platelet plugs by binding to the A1 domain of vWF, which is already bound to the subendothelium. This Canis lupus familiaris (Dog) protein is Platelet glycoprotein Ib alpha chain (GP1BA).